Reading from the N-terminus, the 940-residue chain is Pentatricopeptide repeat-containing protein At5g14770, mitochondrial (940 aa).

A mitochondrion-targeting transit peptide spans 1 to 24 (MIMIRIWNNYKGKYRFFLSNCRSF). PPR repeat units follow at residues 59 to 93 (YVSL…GVVP), 94 to 129 (DSRL…GVSP), 130 to 161 (DVFA…VISI), 162 to 196 (DTVT…GILP), 197 to 231 (DTVS…NLIT), 241 to 259 (NLHA…GFDP), 260 to 294 (DVVT…SVYP), 295 to 329 (NHVT…GIPV), 330 to 364 (DLVV…NQVP), 365 to 399 (NVVT…SVIP), 400 to 434 (NVVT…NVVP), 435 to 469 (NGFT…GVEE), 470 to 504 (NNYI…GVTL), 505 to 539 (DQIN…GMPW), 540 to 573 (DVVS…GIEP), 574 to 608 (DIAT…GIKP), 609 to 643 (SLMS…EIHP), 644 to 678 (NLTT…GIKL), 679 to 713 (SRQV…GFIP), 714 to 748 (DTVT…GISP), 749 to 783 (NVAT…GMRP), 784 to 818 (DDFT…GLVP), 819 to 853 (KTST…GVSP), and 854 to 891 (NTST…GLLK).

Belongs to the PPR family. P subfamily.

The protein localises to the mitochondrion. This chain is Pentatricopeptide repeat-containing protein At5g14770, mitochondrial, found in Arabidopsis thaliana (Mouse-ear cress).